A 294-amino-acid chain; its full sequence is Phenylalanine-4-hydroxylase (294 aa).

Residues 1-20 are disordered; that stretch reads MSGDGLSNGPPPGARPDWTI. Fe cation-binding residues include histidine 129, histidine 134, and glutamate 175.

It belongs to the biopterin-dependent aromatic amino acid hydroxylase family. It depends on Fe(2+) as a cofactor.

It carries out the reaction (6R)-L-erythro-5,6,7,8-tetrahydrobiopterin + L-phenylalanine + O2 = (4aS,6R)-4a-hydroxy-L-erythro-5,6,7,8-tetrahydrobiopterin + L-tyrosine. Its pathway is amino-acid degradation; L-phenylalanine degradation; acetoacetate and fumarate from L-phenylalanine: step 1/6. The protein is Phenylalanine-4-hydroxylase (phhA) of Caulobacter vibrioides (strain ATCC 19089 / CIP 103742 / CB 15) (Caulobacter crescentus).